Reading from the N-terminus, the 247-residue chain is Adenosylcobinamide-GDP ribazoletransferase (247 aa).

A run of 5 helical transmembrane segments spans residues 34 to 54, 59 to 79, 113 to 133, 138 to 158, and 194 to 214; these read IVMF…IFIL, CGIP…TGGF, GGLA…ELAL, VLAA…LLMY, and VLLP…AIFI.

It belongs to the CobS family. The cofactor is Mg(2+).

The protein resides in the cell inner membrane. The catalysed reaction is alpha-ribazole + adenosylcob(III)inamide-GDP = adenosylcob(III)alamin + GMP + H(+). The enzyme catalyses alpha-ribazole 5'-phosphate + adenosylcob(III)inamide-GDP = adenosylcob(III)alamin 5'-phosphate + GMP + H(+). It functions in the pathway cofactor biosynthesis; adenosylcobalamin biosynthesis; adenosylcobalamin from cob(II)yrinate a,c-diamide: step 7/7. Functionally, joins adenosylcobinamide-GDP and alpha-ribazole to generate adenosylcobalamin (Ado-cobalamin). Also synthesizes adenosylcobalamin 5'-phosphate from adenosylcobinamide-GDP and alpha-ribazole 5'-phosphate. The polypeptide is Adenosylcobinamide-GDP ribazoletransferase (Salmonella arizonae (strain ATCC BAA-731 / CDC346-86 / RSK2980)).